The chain runs to 669 residues: NADH-ubiquinone oxidoreductase chain 5 (669 aa).

15 helical membrane passes run 3–23, 50–70, 81–100, 119–139, 178–198, 211–231, 253–273, 286–306, 322–342, 377–397, 423–443, 464–484, 522–542, 628–648, and 649–669; these read LLIV…GRFL, VALC…SELF, LTVI…HIYS, IFTF…LFLG, LALG…STIF, FLFC…VFIG, TPVS…FMIA, LIVI…TGIL, LGYM…FHLM, LLPF…GFPF, FWLG…LLFL, ILMA…GYLA, LIPI…NFVV, AFVM…WDFI, and SFWV…FINI.

It belongs to the complex I subunit 5 family.

It localises to the mitochondrion inner membrane. The enzyme catalyses a ubiquinone + NADH + 5 H(+)(in) = a ubiquinol + NAD(+) + 4 H(+)(out). Its function is as follows. Core subunit of the mitochondrial membrane respiratory chain NADH dehydrogenase (Complex I) that is believed to belong to the minimal assembly required for catalysis. Complex I functions in the transfer of electrons from NADH to the respiratory chain. The immediate electron acceptor for the enzyme is believed to be ubiquinone. In Marchantia polymorpha (Common liverwort), this protein is NADH-ubiquinone oxidoreductase chain 5 (ND5).